A 231-amino-acid chain; its full sequence is Coproheme decarboxylase (231 aa).

Residue lysine 44 forms an Isoglutamyl lysine isopeptide (Lys-Gln) (interchain with Q-Cter in protein Pup) linkage. Tyrosine 133 is a catalytic residue. Position 156 (histidine 156) interacts with Fe-coproporphyrin III.

Belongs to the ChdC family. Type 2 subfamily. Fe-coproporphyrin III is required as a cofactor.

The catalysed reaction is Fe-coproporphyrin III + 2 H2O2 + 2 H(+) = heme b + 2 CO2 + 4 H2O. It carries out the reaction Fe-coproporphyrin III + H2O2 + H(+) = harderoheme III + CO2 + 2 H2O. It catalyses the reaction harderoheme III + H2O2 + H(+) = heme b + CO2 + 2 H2O. It participates in porphyrin-containing compound metabolism; protoheme biosynthesis. Its function is as follows. Involved in coproporphyrin-dependent heme b biosynthesis. Catalyzes the decarboxylation of Fe-coproporphyrin III (coproheme) to heme b (protoheme IX), the last step of the pathway. The reaction occurs in a stepwise manner with a three-propionate intermediate. The sequence is that of Coproheme decarboxylase from Mycolicibacterium smegmatis (strain ATCC 700084 / mc(2)155) (Mycobacterium smegmatis).